The sequence spans 340 residues: Biotin synthase (340 aa).

The tract at residues 1–21 is disordered; it reads MDAASVSFGSGHDLSSQPRHD. The Radical SAM core domain maps to 53 to 272; it reads NHVETANLLS…IAVARIMMPR (220 aa). [4Fe-4S] cluster-binding residues include Cys-68, Cys-72, and Cys-75. The [2Fe-2S] cluster site is built by Cys-112, Cys-143, Cys-203, and Arg-276.

Belongs to the radical SAM superfamily. Biotin synthase family. In terms of assembly, homodimer. Requires [4Fe-4S] cluster as cofactor. [2Fe-2S] cluster serves as cofactor.

The catalysed reaction is (4R,5S)-dethiobiotin + (sulfur carrier)-SH + 2 reduced [2Fe-2S]-[ferredoxin] + 2 S-adenosyl-L-methionine = (sulfur carrier)-H + biotin + 2 5'-deoxyadenosine + 2 L-methionine + 2 oxidized [2Fe-2S]-[ferredoxin]. The protein operates within cofactor biosynthesis; biotin biosynthesis; biotin from 7,8-diaminononanoate: step 2/2. Its function is as follows. Catalyzes the conversion of dethiobiotin (DTB) to biotin by the insertion of a sulfur atom into dethiobiotin via a radical-based mechanism. The protein is Biotin synthase of Nitrobacter hamburgensis (strain DSM 10229 / NCIMB 13809 / X14).